A 96-amino-acid chain; its full sequence is Co-chaperonin GroES (96 aa).

This sequence belongs to the GroES chaperonin family. As to quaternary structure, heptamer of 7 subunits arranged in a ring. Interacts with the chaperonin GroEL.

Its subcellular location is the cytoplasm. In terms of biological role, together with the chaperonin GroEL, plays an essential role in assisting protein folding. The GroEL-GroES system forms a nano-cage that allows encapsulation of the non-native substrate proteins and provides a physical environment optimized to promote and accelerate protein folding. GroES binds to the apical surface of the GroEL ring, thereby capping the opening of the GroEL channel. The sequence is that of Co-chaperonin GroES from Photobacterium profundum (strain SS9).